The sequence spans 260 residues: DNA repair protein RecO (260 aa).

This sequence belongs to the RecO family.

In terms of biological role, involved in DNA repair and RecF pathway recombination. This is DNA repair protein RecO from Salinibacter ruber (strain DSM 13855 / M31).